A 366-amino-acid polypeptide reads, in one-letter code: Galactoside alpha-(1,2)-fucosyltransferase 1 (366 aa).

Topologically, residues 1-8 are cytoplasmic; it reads MWPLSHRH. A helical; Signal-anchor for type II membrane protein transmembrane segment spans residues 9 to 25; it reads LCLAFLLVCVLSAISFF. Over 26 to 366 the chain is Lumenal; sequence LHIHQDSFRH…LSPLWTLAEP (341 aa). Asparagine 66, asparagine 302, and asparagine 328 each carry an N-linked (GlcNAc...) asparagine glycan.

Belongs to the glycosyltransferase 11 family.

Its subcellular location is the golgi apparatus. The protein resides in the golgi stack membrane. The catalysed reaction is a beta-D-galactosyl-(1-&gt;4)-N-acetyl-beta-D-glucosaminyl derivative + GDP-beta-L-fucose = an alpha-L-Fuc-(1-&gt;2)-beta-D-Gal-(1-&gt;4)-beta-D-GlcNAc derivative + GDP + H(+). The enzyme catalyses a ganglioside GA1 + GDP-beta-L-fucose = a ganglioside Fuc-GA1 + GDP + H(+). It catalyses the reaction a beta-D-Gal-(1-&gt;3)-beta-D-GlcNAc-(1-&gt;3)-beta-D-Gal-(1-&gt;4)-beta-D-Glc-(1&lt;-&gt;1')-Cer(d18:1(4E)) + GDP-beta-L-fucose = alpha-L-fucosyl-(1-&gt;2)- beta-D-galactosyl-(1-&gt;3)-N-acetyl-beta-D-glucosaminyl-(1-&gt;3)-beta-D-galactosyl-(1-&gt;4)-beta-D-glucosyl-(1&lt;-&gt;1')-N-acylsphing-4-enine + GDP + H(+). It carries out the reaction a neolactoside nLc4Cer(d18:1(4E)) + GDP-beta-L-fucose = a neolactoside IV(2)-alpha-Fuc-nLc4Cer(d18:1(4E)) + GDP + H(+). The catalysed reaction is a ganglioside GM1 + GDP-beta-L-fucose = a ganglioside Fuc-GM1 + GDP + H(+). The enzyme catalyses beta-D-galactosyl-(1-&gt;3)-N-acetyl-D-galactosamine + GDP-beta-L-fucose = alpha-L-fucosyl-(1-&gt;2)-beta-D-galactosyl-(1-&gt;3)-N-acetyl-D-galactosamine + GDP + H(+). Its pathway is protein modification; protein glycosylation. Its function is as follows. Catalyzes the transfer of L-fucose, from a guanosine diphosphate-beta-L-fucose, to the terminal galactose residue of glycoconjugates through an alpha(1,2) linkage leading to H antigen synthesis that is an intermediate substrate in the synthesis of ABO blood group antigens. H antigen is essential for maturation of the glomerular layer of the main olfactory bulb, in cell migration and early cell-cell contacts during tumor associated angiogenesis. Preferentially fucosylates soluble lactose and to a lesser extent fucosylates glycolipids gangliosides GA1 and GM1a. The protein is Galactoside alpha-(1,2)-fucosyltransferase 1 of Plecturocebus brunneus (Brown titi monkey).